We begin with the raw amino-acid sequence, 275 residues long: Polyamine aminopropyltransferase (275 aa).

The PABS domain occupies 2–235 (ELWFTEKQTK…GLWTFTIGSK (234 aa)). An S-methyl-5'-thioadenosine-binding site is contributed by Gln31. Positions 62 and 86 each coordinate spermidine. S-methyl-5'-thioadenosine-binding positions include Glu106 and 137–138 (DG). The active-site Proton acceptor is Asp155. 155–158 (DSTE) is a binding site for spermidine. Pro162 is an S-methyl-5'-thioadenosine binding site.

It belongs to the spermidine/spermine synthase family. In terms of assembly, homodimer or homotetramer.

It localises to the cytoplasm. The enzyme catalyses S-adenosyl 3-(methylsulfanyl)propylamine + putrescine = S-methyl-5'-thioadenosine + spermidine + H(+). Its pathway is amine and polyamine biosynthesis; spermidine biosynthesis; spermidine from putrescine: step 1/1. Functionally, catalyzes the irreversible transfer of a propylamine group from the amino donor S-adenosylmethioninamine (decarboxy-AdoMet) to putrescine (1,4-diaminobutane) to yield spermidine. This Bacillus cytotoxicus (strain DSM 22905 / CIP 110041 / 391-98 / NVH 391-98) protein is Polyamine aminopropyltransferase.